The primary structure comprises 479 residues: Sulfate adenylyltransferase subunit 1 (479 aa).

A tr-type G domain is found at 25-239 (KSLLRFLTCG…EVLETVDIQR (215 aa)). Positions 34-41 (GSVDDGKS) are G1. 34–41 (GSVDDGKS) is a binding site for GTP. Residues 92 to 96 (GITID) form a G2 region. Residues 113 to 116 (DTPG) form a G3 region. GTP contacts are provided by residues 113-117 (DTPGH) and 168-171 (NKMD). A G4 region spans residues 168–171 (NKMD). The segment at 206–208 (SAL) is G5.

The protein belongs to the TRAFAC class translation factor GTPase superfamily. Classic translation factor GTPase family. CysN/NodQ subfamily. Heterodimer composed of CysD, the smaller subunit, and CysN.

The enzyme catalyses sulfate + ATP + H(+) = adenosine 5'-phosphosulfate + diphosphate. The protein operates within sulfur metabolism; hydrogen sulfide biosynthesis; sulfite from sulfate: step 1/3. With CysD forms the ATP sulfurylase (ATPS) that catalyzes the adenylation of sulfate producing adenosine 5'-phosphosulfate (APS) and diphosphate, the first enzymatic step in sulfur assimilation pathway. APS synthesis involves the formation of a high-energy phosphoric-sulfuric acid anhydride bond driven by GTP hydrolysis by CysN coupled to ATP hydrolysis by CysD. This is Sulfate adenylyltransferase subunit 1 from Salmonella typhimurium (strain LT2 / SGSC1412 / ATCC 700720).